Reading from the N-terminus, the 707-residue chain is Matrix metalloproteinase-9 (707 aa).

An N-terminal signal peptide occupies residues 1-19 (MSLWQPLVLVLLVLGCCFA). The propeptide at 20-93 (APRQRQSTLV…GELDSATLKA (74 aa)) is activation peptide. An N-linked (GlcNAc...) asparagine glycan is attached at N38. The Cysteine switch signature appears at 97 to 104 (PRCGVPDL). Residue C99 coordinates Zn(2+). N-linked (GlcNAc...) asparagine glycosylation is found at N120 and N127. Positions 131 and 165 each coordinate Ca(2+). Zn(2+)-binding residues include H175 and D177. Ca(2+)-binding residues include D182, G183, D185, and L187. H190 contributes to the Zn(2+) binding site. Ca(2+)-binding residues include G197, Q199, and D201. Residue H203 participates in Zn(2+) binding. Residues D205, D206, and E208 each contribute to the Ca(2+) site. Fibronectin type-II domains are found at residues 225-273 (ADGA…FCPS), 283-331 (ADGK…FCPT), and 342-390 (SAGE…FCPD). Intrachain disulfides connect C230–C256, C244–C271, C288–C314, C302–C329, C347–C373, and C361–C388. A Zn(2+)-binding site is contributed by H401. Residue E402 is part of the active site. Zn(2+)-binding residues include H405 and H411. The tract at residues 431 to 508 (LHKDDVNGIR…AGPSTATTVP (78 aa)) is disordered. Pro residues-rich tracts occupy residues 452–475 (RPPT…PPTV) and 486–499 (TGPP…PPTA). A disulfide bond links C516 and C704. Hemopexin repeat units follow at residues 518-563 (VNIF…WPAL), 564-608 (PRKL…GLGA), 610-657 (VAQV…FPGV), and 658-704 (PLDT…ILQC).

The protein belongs to the peptidase M10A family. As to quaternary structure, exists as monomer or homodimer; disulfide-linked. Also exists as heterodimer with LCN2. Macrophages and transformed cell lines produce only the monomeric form. Interacts with ECM1. In terms of assembly, (Microbial infection) Interacts with Staphylococcus aureus protein SSL5; this interaction inhibits MMP9 activity. Zn(2+) is required as a cofactor. Requires Ca(2+) as cofactor. Post-translationally, processing of the precursor yields different active forms of 64, 67 and 82 kDa. Sequentially processing by MMP3 yields the 82 kDa matrix metalloproteinase-9. In terms of processing, N- and O-glycosylated. As to expression, detected in neutrophils (at protein level). Produced by normal alveolar macrophages and granulocytes.

The protein resides in the secreted. Its subcellular location is the extracellular space. It localises to the extracellular matrix. The catalysed reaction is Cleavage of gelatin types I and V and collagen types IV and V.. With respect to regulation, inhibited by histatin-3 1/24 (histatin-5). Inhibited by ECM1. Functionally, matrix metalloproteinase that plays an essential role in local proteolysis of the extracellular matrix and in leukocyte migration. Could play a role in bone osteoclastic resorption. Cleaves KiSS1 at a Gly-|-Leu bond. Cleaves NINJ1 to generate the Secreted ninjurin-1 form. Cleaves type IV and type V collagen into large C-terminal three quarter fragments and shorter N-terminal one quarter fragments. Degrades fibronectin but not laminin or Pz-peptide. This is Matrix metalloproteinase-9 (MMP9) from Homo sapiens (Human).